We begin with the raw amino-acid sequence, 240 residues long: Homeobox protein DLX-4 (240 aa).

Residues 80–120 are disordered; the sequence is QPLCGPAEHPQELEADSEKPRLSPEPSERRPQAPAKKLRKP. Residues 88–110 are compositionally biased toward basic and acidic residues; sequence HPQELEADSEKPRLSPEPSERRP. Residues 117–176 constitute a DNA-binding region (homeobox); the sequence is LRKPRTIYSSLQLQHLNQRFQHTQYLALPERAQLAAQLGLTQTQVKIWFQNKRSKYKKLL.

The protein belongs to the distal-less homeobox family. In terms of tissue distribution, expressed in leukemia cells and placenta. Also expressed in kidney and fetal liver.

The protein localises to the nucleus. Its function is as follows. May play a role in determining the production of hemoglobin S. May act as a repressor. During embryonic development, plays a role in palatogenesis. The polypeptide is Homeobox protein DLX-4 (DLX4) (Homo sapiens (Human)).